A 388-amino-acid polypeptide reads, in one-letter code: Cobalt-precorrin-5B C(1)-methyltransferase (388 aa).

It belongs to the CbiD family.

The enzyme catalyses Co-precorrin-5B + S-adenosyl-L-methionine = Co-precorrin-6A + S-adenosyl-L-homocysteine. The protein operates within cofactor biosynthesis; adenosylcobalamin biosynthesis; cob(II)yrinate a,c-diamide from sirohydrochlorin (anaerobic route): step 6/10. Catalyzes the methylation of C-1 in cobalt-precorrin-5B to form cobalt-precorrin-6A. The polypeptide is Cobalt-precorrin-5B C(1)-methyltransferase (Rubrobacter xylanophilus (strain DSM 9941 / JCM 11954 / NBRC 16129 / PRD-1)).